The following is a 698-amino-acid chain: Probable Xaa-Pro aminopeptidase P (698 aa).

Positions 509, 520, 604, and 618 each coordinate Mn(2+).

It belongs to the peptidase M24B family. Mn(2+) is required as a cofactor.

It catalyses the reaction Release of any N-terminal amino acid, including proline, that is linked to proline, even from a dipeptide or tripeptide.. Its function is as follows. Catalyzes the removal of a penultimate prolyl residue from the N-termini of peptides. The sequence is that of Probable Xaa-Pro aminopeptidase P (AMPP) from Arthroderma benhamiae (strain ATCC MYA-4681 / CBS 112371) (Trichophyton mentagrophytes).